The chain runs to 358 residues: Alanine racemase (358 aa).

Residue K35 is the Proton acceptor; specific for D-alanine of the active site. K35 bears the N6-(pyridoxal phosphate)lysine mark. Residue R130 participates in substrate binding. The active-site Proton acceptor; specific for L-alanine is Y255. Position 303 (M303) interacts with substrate.

Belongs to the alanine racemase family. It depends on pyridoxal 5'-phosphate as a cofactor.

It carries out the reaction L-alanine = D-alanine. It participates in amino-acid biosynthesis; D-alanine biosynthesis; D-alanine from L-alanine: step 1/1. Functionally, catalyzes the interconversion of L-alanine and D-alanine. May also act on other amino acids. The protein is Alanine racemase (alr) of Shewanella baltica (strain OS223).